A 62-amino-acid chain; its full sequence is Photosystem II reaction center protein Z (62 aa).

The next 2 membrane-spanning stretches (helical) occupy residues 8–28 and 41–61; these read ALIS…VAYA and WLGS…NFFV.

It belongs to the PsbZ family. In terms of assembly, PSII is composed of 1 copy each of membrane proteins PsbA, PsbB, PsbC, PsbD, PsbE, PsbF, PsbH, PsbI, PsbJ, PsbK, PsbL, PsbM, PsbT, PsbX, PsbY, PsbZ, Psb30/Ycf12, peripheral proteins PsbO, CyanoQ (PsbQ), PsbU, PsbV and a large number of cofactors. It forms dimeric complexes.

It is found in the cellular thylakoid membrane. In terms of biological role, may control the interaction of photosystem II (PSII) cores with the light-harvesting antenna, regulates electron flow through the 2 photosystem reaction centers. PSII is a light-driven water plastoquinone oxidoreductase, using light energy to abstract electrons from H(2)O, generating a proton gradient subsequently used for ATP formation. This chain is Photosystem II reaction center protein Z, found in Trichormus variabilis (strain ATCC 29413 / PCC 7937) (Anabaena variabilis).